Reading from the N-terminus, the 83-residue chain is Molybdopterin synthase sulfur carrier subunit (83 aa).

Belongs to the MoaD family.

It functions in the pathway cofactor biosynthesis; molybdopterin biosynthesis. Involved in sulfur transfer in the conversion of molybdopterin precursor Z to molybdopterin. Probably plays a role in host phagosome maturation arrest. In Mycobacterium tuberculosis (strain ATCC 25618 / H37Rv), this protein is Molybdopterin synthase sulfur carrier subunit (moaD1).